Consider the following 659-residue polypeptide: Cysteine-rich receptor-like protein kinase 5 (659 aa).

Residues 1-24 (MSAYTSLNFLFLLTFFIGSLRVSA) form the signal peptide. Residues 25–279 (QLQDPTYVGH…FPPGKGKNST (255 aa)) are Extracellular-facing. 2 Gnk2-homologous domains span residues 28–132 (DPTY…DRNI) and 138–243 (TTTT…VYPF). N-linked (GlcNAc...) asparagine glycans are attached at residues Asn-175 and Asn-277. A helical transmembrane segment spans residues 280–300 (VIIIAIVVPVAISVLICVAVF). Residues 301–659 (SFHASKRAKK…AASITILAPR (359 aa)) are Cytoplasmic-facing. One can recognise a Protein kinase domain in the interval 340–619 (FSMCNKLGQG…QMLTTSSIAL (280 aa)). ATP contacts are provided by residues 346-354 (LGQGGFGQV) and Lys-368. The residue at position 413 (Tyr-413) is a Phosphotyrosine. Asp-465 acts as the Proton acceptor in catalysis. Thr-505 is modified (phosphothreonine). Tyr-513 is subject to Phosphotyrosine.

Belongs to the protein kinase superfamily. Ser/Thr protein kinase family. CRK subfamily. As to quaternary structure, interacts with CRKIP1 (KAPP), CRKIP2 and CRKIP3, three kinase-associated type 2C proteins.

The protein localises to the membrane. The catalysed reaction is L-seryl-[protein] + ATP = O-phospho-L-seryl-[protein] + ADP + H(+). The enzyme catalyses L-threonyl-[protein] + ATP = O-phospho-L-threonyl-[protein] + ADP + H(+). Involved in multiple distinct defense responses. May function as a disease resistance (R) protein. This chain is Cysteine-rich receptor-like protein kinase 5 (CRK5), found in Arabidopsis thaliana (Mouse-ear cress).